The following is a 156-amino-acid chain: SsrA-binding protein (156 aa).

The protein belongs to the SmpB family.

Its subcellular location is the cytoplasm. Functionally, required for rescue of stalled ribosomes mediated by trans-translation. Binds to transfer-messenger RNA (tmRNA), required for stable association of tmRNA with ribosomes. tmRNA and SmpB together mimic tRNA shape, replacing the anticodon stem-loop with SmpB. tmRNA is encoded by the ssrA gene; the 2 termini fold to resemble tRNA(Ala) and it encodes a 'tag peptide', a short internal open reading frame. During trans-translation Ala-aminoacylated tmRNA acts like a tRNA, entering the A-site of stalled ribosomes, displacing the stalled mRNA. The ribosome then switches to translate the ORF on the tmRNA; the nascent peptide is terminated with the 'tag peptide' encoded by the tmRNA and targeted for degradation. The ribosome is freed to recommence translation, which seems to be the essential function of trans-translation. The polypeptide is SsrA-binding protein (Renibacterium salmoninarum (strain ATCC 33209 / DSM 20767 / JCM 11484 / NBRC 15589 / NCIMB 2235)).